Consider the following 378-residue polypeptide: tRNA N(3)-cytidine methyltransferase METTL2 (378 aa).

Residues W78, Y82, G188, D213, D239, L240, and I260 each contribute to the S-adenosyl-L-methionine site.

Belongs to the methyltransferase superfamily. METL family. Monomer. Interacts with DALRD3.

It localises to the cytoplasm. The enzyme catalyses cytidine(32) in tRNA(Thr) + S-adenosyl-L-methionine = N(3)-methylcytidine(32) in tRNA(Thr) + S-adenosyl-L-homocysteine + H(+). It carries out the reaction cytidine(32) in tRNA(Arg)(CCU) + S-adenosyl-L-methionine = N(3)-methylcytidine(32) in tRNA(Arg)(CCU) + S-adenosyl-L-homocysteine + H(+). S-adenosyl-L-methionine-dependent methyltransferase that mediates N(3)-methylcytidine modification of residue 32 of the tRNA anticodon loop of tRNA(Thr)(UGU) and tRNA(Arg)(CCU). N(3)-methylcytidine methylation by METTL2 requires the N6-threonylcarbamoylation of tRNA (t6A37) by the EKC/KEOPS complex as prerequisite. This Bos taurus (Bovine) protein is tRNA N(3)-cytidine methyltransferase METTL2 (METTL2).